Consider the following 206-residue polypeptide: Large ribosomal subunit protein mL62 (206 aa).

Residues 1-29 (MATAWGLRWGLSRTGTLLLAPPARCARRA) constitute a mitochondrion transit peptide. Gln90 carries the post-translational modification N5-methylglutamine.

It belongs to the prokaryotic/mitochondrial release factor family. Mitochondrion-specific ribosomal protein mL62 subfamily. Component of the mitochondrial ribosome large subunit (39S) which comprises a 16S rRNA and about 50 distinct proteins. Post-translationally, methylation of glutamine in the GGQ triplet by HEMK1.

It is found in the mitochondrion. The enzyme catalyses an N-acyl-L-alpha-aminoacyl-tRNA + H2O = an N-acyl-L-amino acid + a tRNA + H(+). Its function is as follows. Essential peptidyl-tRNA hydrolase component of the mitochondrial large ribosomal subunit. Acts as a codon-independent translation release factor that has lost all stop codon specificity and directs the termination of translation in mitochondrion, possibly in case of abortive elongation. May be involved in the hydrolysis of peptidyl-tRNAs that have been prematurely terminated and thus in the recycling of stalled mitochondrial ribosomes. The polypeptide is Large ribosomal subunit protein mL62 (Mus musculus (Mouse)).